The primary structure comprises 701 residues: Elongation factor G (701 aa).

The tr-type G domain maps to 8 to 290 (SRYRNIGISA…AVIEYLPAPT (283 aa)). GTP is bound by residues 17-24 (AHIDAGKT), 88-92 (DTPGH), and 142-145 (NKMD).

This sequence belongs to the TRAFAC class translation factor GTPase superfamily. Classic translation factor GTPase family. EF-G/EF-2 subfamily.

Its subcellular location is the cytoplasm. Its function is as follows. Catalyzes the GTP-dependent ribosomal translocation step during translation elongation. During this step, the ribosome changes from the pre-translocational (PRE) to the post-translocational (POST) state as the newly formed A-site-bound peptidyl-tRNA and P-site-bound deacylated tRNA move to the P and E sites, respectively. Catalyzes the coordinated movement of the two tRNA molecules, the mRNA and conformational changes in the ribosome. This Actinobacillus pleuropneumoniae serotype 5b (strain L20) protein is Elongation factor G.